The following is a 356-amino-acid chain: Chorismate synthase (356 aa).

Arginine 44 contributes to the NADP(+) binding site. FMN-binding positions include 121 to 123, glycine 278, 293 to 297, and arginine 320; these read HFS and KPTPS.

Belongs to the chorismate synthase family. It depends on FMNH2 as a cofactor.

It catalyses the reaction 5-O-(1-carboxyvinyl)-3-phosphoshikimate = chorismate + phosphate. Its pathway is metabolic intermediate biosynthesis; chorismate biosynthesis; chorismate from D-erythrose 4-phosphate and phosphoenolpyruvate: step 7/7. In terms of biological role, catalyzes the anti-1,4-elimination of the C-3 phosphate and the C-6 proR hydrogen from 5-enolpyruvylshikimate-3-phosphate (EPSP) to yield chorismate, which is the branch point compound that serves as the starting substrate for the three terminal pathways of aromatic amino acid biosynthesis. This reaction introduces a second double bond into the aromatic ring system. This Pyrococcus abyssi (strain GE5 / Orsay) protein is Chorismate synthase.